A 543-amino-acid polypeptide reads, in one-letter code: CTP synthase (543 aa).

The interval 1–267 (MKQTKYIFVT…LSPIAEILDL (267 aa)) is amidoligase domain. S15 lines the CTP pocket. Residue S15 coordinates UTP. Residues 16–21 (SLGKGI) and D73 each bind ATP. Residues D73 and E141 each contribute to the Mg(2+) site. Residues 148-150 (DIE), 188-193 (KTKPTQ), and K224 each bind CTP. UTP is bound by residues 188–193 (KTKPTQ) and K224. In terms of domain architecture, Glutamine amidotransferase type-1 spans 292-543 (KIAFVGKYVD…IKAAINYEDN (252 aa)). G354 contacts L-glutamine. C381 functions as the Nucleophile; for glutamine hydrolysis in the catalytic mechanism. Residues 382–385 (LGMQ), E405, and R473 contribute to the L-glutamine site. Residues H516 and E518 contribute to the active site.

Belongs to the CTP synthase family. Homotetramer.

It carries out the reaction UTP + L-glutamine + ATP + H2O = CTP + L-glutamate + ADP + phosphate + 2 H(+). The catalysed reaction is L-glutamine + H2O = L-glutamate + NH4(+). The enzyme catalyses UTP + NH4(+) + ATP = CTP + ADP + phosphate + 2 H(+). Its pathway is pyrimidine metabolism; CTP biosynthesis via de novo pathway; CTP from UDP: step 2/2. Allosterically activated by GTP, when glutamine is the substrate; GTP has no effect on the reaction when ammonia is the substrate. The allosteric effector GTP functions by stabilizing the protein conformation that binds the tetrahedral intermediate(s) formed during glutamine hydrolysis. Inhibited by the product CTP, via allosteric rather than competitive inhibition. Functionally, catalyzes the ATP-dependent amination of UTP to CTP with either L-glutamine or ammonia as the source of nitrogen. Regulates intracellular CTP levels through interactions with the four ribonucleotide triphosphates. In Campylobacter jejuni subsp. jejuni serotype O:2 (strain ATCC 700819 / NCTC 11168), this protein is CTP synthase.